A 128-amino-acid polypeptide reads, in one-letter code: MRHRKSGRHLSRTSSHRKAMFQNMAVSLFEHELIKTTLPKAKELRRVAEPLITLAKTDSVANRRLAFDRTRSKAIVGKLFNDLGKRYATREGGYLRILKCGFRAGDNAPMAYVELVDRAVGGEAVSAE.

This sequence belongs to the bacterial ribosomal protein bL17 family. As to quaternary structure, part of the 50S ribosomal subunit. Contacts protein L32.

The protein is Large ribosomal subunit protein bL17 of Pseudomonas fluorescens (strain Pf0-1).